The chain runs to 585 residues: SLAIN motif-containing protein-like (585 aa).

5 disordered regions span residues 1–34, 55–125, 324–365, 402–476, and 492–585; these read MVVP…PNLT, NQTL…RVEE, QDYA…EDEC, PRLS…SDGQ, and GSMS…DGCY. Residues 68–83 show a composition bias toward polar residues; sequence GGTNNSNLKAGSNINN. Residues 327-345 are compositionally biased toward low complexity; sequence ASTSASRRSSSASLQSLRR. A compositionally biased stretch (acidic residues) spans 351 to 365; the sequence is QEFDSYSQEDEEDEC. Composition is skewed to polar residues over residues 425-434, 441-476, and 549-563; these read PNLTPRTSLR, NSRS…SDGQ, and ASPS…TPRS. A compositionally biased stretch (basic and acidic residues) spans 575–585; sequence LTDESWKDGCY.

Belongs to the SLAIN motif-containing family.

The polypeptide is SLAIN motif-containing protein-like (Danio rerio (Zebrafish)).